The chain runs to 423 residues: Imidazolonepropionase (423 aa).

Fe(3+) is bound by residues H78 and H80. Residues H78 and H80 each coordinate Zn(2+). Residues R87, Y150, and H183 each coordinate 4-imidazolone-5-propanoate. Y150 provides a ligand contact to N-formimidoyl-L-glutamate. H247 lines the Fe(3+) pocket. Residue H247 coordinates Zn(2+). A 4-imidazolone-5-propanoate-binding site is contributed by E250. D322 contributes to the Fe(3+) binding site. Position 322 (D322) interacts with Zn(2+). Residues N324 and G326 each contribute to the N-formimidoyl-L-glutamate site. A 4-imidazolone-5-propanoate-binding site is contributed by S327.

The protein belongs to the metallo-dependent hydrolases superfamily. HutI family. Requires Zn(2+) as cofactor. Fe(3+) serves as cofactor.

It localises to the cytoplasm. The catalysed reaction is 4-imidazolone-5-propanoate + H2O = N-formimidoyl-L-glutamate. The protein operates within amino-acid degradation; L-histidine degradation into L-glutamate; N-formimidoyl-L-glutamate from L-histidine: step 3/3. Functionally, catalyzes the hydrolytic cleavage of the carbon-nitrogen bond in imidazolone-5-propanoate to yield N-formimidoyl-L-glutamate. It is the third step in the universal histidine degradation pathway. This Bacillus anthracis (strain A0248) protein is Imidazolonepropionase.